The chain runs to 303 residues: Nucleotide-binding protein Dvul_1502 (303 aa).

23–30 (GLSGAGKS) is an ATP binding site. 75–78 (DLRE) contacts GTP.

The protein belongs to the RapZ-like family.

Displays ATPase and GTPase activities. In Nitratidesulfovibrio vulgaris (strain DP4) (Desulfovibrio vulgaris), this protein is Nucleotide-binding protein Dvul_1502.